The primary structure comprises 130 residues: Universal stress protein MSMEG_4207 (130 aa).

N6-acetyllysine is present on Lys104.

It belongs to the universal stress protein A family. Post-translationally, acetylated on Lys-104 by PatA in the presence of acetyl-CoA as an acetyl donor.

The protein is Universal stress protein MSMEG_4207 of Mycolicibacterium smegmatis (strain ATCC 700084 / mc(2)155) (Mycobacterium smegmatis).